A 1430-amino-acid chain; its full sequence is Bromodomain-containing protein homolog (1430 aa).

A C2H2-type zinc finger spans residues 23–49 (FACPVRGCDRSYKTIMGLQYHLMKYDH). The interval 51-111 (NPQPLTPVLT…AGGGSASGVS (61 aa)) is disordered. Residues 62-81 (SRKKARSRSGGHHSTPRPHK) are compositionally biased toward basic residues. The PHD-type 1 zinc-finger motif lies at 283-333 (DAVCCICLDGECQNTNVILFCDMCNLAVHQDCYGVPYIPEGQWLCRRCLQS). Zn(2+) is bound by residues cysteine 286, cysteine 289, cysteine 303, cysteine 306, histidine 311, cysteine 314, cysteine 327, and cysteine 330. The C2HC pre-PHD-type zinc finger occupies 337-370 (PVNCVLCPNAGGAFKQTDHGQWAHVVCALWIPEV). The PHD-type 2 zinc-finger motif lies at 394 to 457 (LTCYVCKEKG…QKFAYCHAHT (64 aa)). Residues 611 to 715 (LQLNPLEAAL…DQAAPLFVQV (105 aa)) form the Bromo domain. Positions 796 to 805 (KARFAARHSS) are enriched in basic residues. 4 disordered regions span residues 796–887 (KARF…SSPV), 901–942 (AQAA…TTAA), 1012–1054 (ANLP…QALP), and 1076–1301 (QRDV…GQKP). A compositionally biased stretch (acidic residues) spans 842–857 (HDDDDEEEDSDEDSMG). Polar residues predominate over residues 865–887 (LLNSTQTPPCSPIKSLNNSSSPV). 3 stretches are compositionally biased toward low complexity: residues 922-942 (NSQSSNTQSTSGSSSSVTTAA), 1034-1043 (SSSMSPKKSP), and 1085-1107 (APSQSSSPCSSCSDFSMSGSCSD). Residues 1108 to 1120 (FDSDEASEGDADG) show a composition bias toward acidic residues. Over residues 1121 to 1137 (DPDRDGGRSRSEERDST) the composition is skewed to basic and acidic residues. 2 stretches are compositionally biased toward polar residues: residues 1151-1165 (ASLNNVQGNNGNMAI) and 1265-1278 (NTTAAGSAPLTNNN). A compositionally biased stretch (basic and acidic residues) spans 1281–1293 (KHSEDSASSERHN). One can recognise a PWWP domain in the interval 1305–1378 (PLQLVWAKCR…TWQWLPANKL (74 aa)).

In terms of assembly, component of the Enok complex composed of at least Br140, enok, Eaf6 and Ing5. As part of the Enok complex, interacts with elg1 and the Elg1 RFC-like complex.

Its subcellular location is the nucleus. Scaffold subunit of the histone acetyltransferase (HAT) Enok complex which has histone H3 acetyltransferase activity. As part of the Enok complex, associates with the Elg1 RFC-like complex and down-regulates its PCNA-unloading function to promote the G1/S transition. May also play a role in maintaining the protein levels and stability of enok. In Drosophila melanogaster (Fruit fly), this protein is Bromodomain-containing protein homolog.